The following is a 157-amino-acid chain: Holo-[acyl-carrier-protein] synthase (157 aa).

Mg(2+) is bound by residues D8 and E59.

This sequence belongs to the P-Pant transferase superfamily. AcpS family. Mg(2+) serves as cofactor.

It localises to the cytoplasm. The enzyme catalyses apo-[ACP] + CoA = holo-[ACP] + adenosine 3',5'-bisphosphate + H(+). Functionally, transfers the 4'-phosphopantetheine moiety from coenzyme A to a Ser of acyl-carrier-protein. The sequence is that of Holo-[acyl-carrier-protein] synthase from Gluconobacter oxydans (strain 621H) (Gluconobacter suboxydans).